Consider the following 308-residue polypeptide: Elongation factor Ts (308 aa).

The segment at 80-83 (TDFV) is involved in Mg(2+) ion dislocation from EF-Tu.

The protein belongs to the EF-Ts family.

The protein localises to the cytoplasm. Functionally, associates with the EF-Tu.GDP complex and induces the exchange of GDP to GTP. It remains bound to the aminoacyl-tRNA.EF-Tu.GTP complex up to the GTP hydrolysis stage on the ribosome. The polypeptide is Elongation factor Ts (Agrobacterium fabrum (strain C58 / ATCC 33970) (Agrobacterium tumefaciens (strain C58))).